The chain runs to 234 residues: Transcriptional regulatory protein CseB (234 aa).

One can recognise a Response regulatory domain in the interval 6 to 119 (HVLFVEDDDV…VLVARIRAVL (114 aa)). Aspartate 55 is modified (4-aspartylphosphate). The ompR/PhoB-type DNA-binding region spans 140 to 234 (GGVLTFGDLE…VRGFGYKLKA (95 aa)).

Post-translationally, phosphorylated by CseC.

It localises to the cytoplasm. Functionally, member of the two-component regulatory system CseB/CseC involved in the stability of the cell envelope. CseB activates transcription of RNA polymerase sigma-E factor, in response to changes in the cell envelope. The protein is Transcriptional regulatory protein CseB (cseB) of Streptomyces coelicolor (strain ATCC BAA-471 / A3(2) / M145).